The following is a 101-amino-acid chain: Ascorbate-specific PTS system EIIB component (101 aa).

Residues 3–96 (VRILAVCGNG…KLLKVIKEHF (94 aa)) form the PTS EIIB type-2 domain. The active-site Phosphocysteine intermediate is the C9. A Phosphocysteine modification is found at C9.

The protein resides in the cytoplasm. It catalyses the reaction N(pros)-phospho-L-histidyl-[protein] + L-ascorbate(out) = L-ascorbate 6-phosphate(in) + L-histidyl-[protein]. Functionally, the phosphoenolpyruvate-dependent sugar phosphotransferase system (sugar PTS), a major carbohydrate active transport system, catalyzes the phosphorylation of incoming sugar substrates concomitantly with their translocation across the cell membrane. The enzyme II UlaABC PTS system is involved in ascorbate transport. This Shigella dysenteriae serotype 1 (strain Sd197) protein is Ascorbate-specific PTS system EIIB component (ulaB).